The primary structure comprises 194 residues: MRKAEVKRKTKETDIYAELNIDGKGNYDIATGIGFFDHMLSLFAKHGLFDLKVVAKGDLEVDTHHTVEDVGIVLGNAFLKAAGDKKSIKRFSTFYVPMDEALVRVSVDISGRSFLYCDLPLKAERVGNFETENVEEFLRAFAYNFGITLHVELLHGGNSHHIIEATFKALGRALDEALRIDERAEGIPSTKGIL.

This sequence belongs to the imidazoleglycerol-phosphate dehydratase family.

It is found in the cytoplasm. The catalysed reaction is D-erythro-1-(imidazol-4-yl)glycerol 3-phosphate = 3-(imidazol-4-yl)-2-oxopropyl phosphate + H2O. The protein operates within amino-acid biosynthesis; L-histidine biosynthesis; L-histidine from 5-phospho-alpha-D-ribose 1-diphosphate: step 6/9. The polypeptide is Imidazoleglycerol-phosphate dehydratase (Thermoanaerobacter sp. (strain X514)).